The primary structure comprises 447 residues: Probable glycine dehydrogenase (decarboxylating) subunit 1 (447 aa).

It belongs to the GcvP family. N-terminal subunit subfamily. The glycine cleavage system is composed of four proteins: P, T, L and H. In this organism, the P 'protein' is a heterodimer of two subunits.

The catalysed reaction is N(6)-[(R)-lipoyl]-L-lysyl-[glycine-cleavage complex H protein] + glycine + H(+) = N(6)-[(R)-S(8)-aminomethyldihydrolipoyl]-L-lysyl-[glycine-cleavage complex H protein] + CO2. Functionally, the glycine cleavage system catalyzes the degradation of glycine. The P protein binds the alpha-amino group of glycine through its pyridoxal phosphate cofactor; CO(2) is released and the remaining methylamine moiety is then transferred to the lipoamide cofactor of the H protein. The polypeptide is Probable glycine dehydrogenase (decarboxylating) subunit 1 (Sulfolobus acidocaldarius (strain ATCC 33909 / DSM 639 / JCM 8929 / NBRC 15157 / NCIMB 11770)).